The primary structure comprises 944 residues: UvrABC system protein A (944 aa).

ATP is bound at residue 31 to 38; that stretch reads GLSGSGKS. A C4-type zinc finger spans residues 253–280; that stretch reads CPVCGHAISELEPKLFSFNNPAGACPTC. 2 ABC transporter domains span residues 309 to 586 and 606 to 936; these read WDRR…PDSL and RNKK…HYLK. ATP is bound at residue 639–646; it reads GVSGSGKS. The C4-type zinc finger occupies 739 to 765; the sequence is CEACQGDGLIKVEMHFLPDIYVPCDVC.

The protein belongs to the ABC transporter superfamily. UvrA family. As to quaternary structure, forms a heterotetramer with UvrB during the search for lesions.

The protein localises to the cytoplasm. Functionally, the UvrABC repair system catalyzes the recognition and processing of DNA lesions. UvrA is an ATPase and a DNA-binding protein. A damage recognition complex composed of 2 UvrA and 2 UvrB subunits scans DNA for abnormalities. When the presence of a lesion has been verified by UvrB, the UvrA molecules dissociate. The protein is UvrABC system protein A of Pseudomonas putida (strain ATCC 47054 / DSM 6125 / CFBP 8728 / NCIMB 11950 / KT2440).